The primary structure comprises 271 residues: uncharacterized protein (271 aa).

The 101-residue stretch at 24 to 124 folds into the AB hydrolase-1 domain; it reads PIILLVHGGG…QVHVMIPHEP (101 aa).

Belongs to the AB hydrolase superfamily.

This is an uncharacterized protein from Bacillus subtilis (strain 168).